Consider the following 777-residue polypeptide: Myotubularin-related protein 10 (777 aa).

The disordered stretch occupies residues 196–217 (PSGDGGGGGGGGNGAGGGSSQK). Over residues 197-214 (SGDGGGGGGGGNGAGGGS) the composition is skewed to gly residues. The Myotubularin phosphatase domain occupies 221–661 (FETYSDWDRE…THIKLWKLCY (441 aa)). Phosphoserine occurs at positions 607 and 751.

This sequence belongs to the protein-tyrosine phosphatase family. Non-receptor class myotubularin subfamily.

This Homo sapiens (Human) protein is Myotubularin-related protein 10 (MTMR10).